The following is a 70-amino-acid chain: uncharacterized protein (70 aa).

This is an uncharacterized protein from Schizosaccharomyces pombe (strain 972 / ATCC 24843) (Fission yeast).